The sequence spans 326 residues: Peroxidase 39 (326 aa).

An N-terminal signal peptide occupies residues 1 to 23 (MTRFGLALLMILVIQGLVTFSEA). Disulfide bonds link Cys-34–Cys-114, Cys-67–Cys-72, Cys-120–Cys-322, and Cys-199–Cys-232. The active-site Proton acceptor is the His-65. The Ca(2+) site is built by Asp-66, Val-69, Gly-71, Asp-73, and Ser-75. N-linked (GlcNAc...) asparagine glycosylation is present at Asn-79. Residue Pro-162 participates in substrate binding. N-linked (GlcNAc...) asparagine glycosylation occurs at Asn-167. Residue His-192 participates in heme b binding. Thr-193 serves as a coordination point for Ca(2+). N-linked (GlcNAc...) asparagine glycans are attached at residues Asn-208 and Asn-238. Positions 245, 248, and 253 each coordinate Ca(2+).

The protein belongs to the peroxidase family. Classical plant (class III) peroxidase subfamily. Heme b is required as a cofactor. The cofactor is Ca(2+). In terms of tissue distribution, slightly expressed in roots.

The protein localises to the secreted. It catalyses the reaction 2 a phenolic donor + H2O2 = 2 a phenolic radical donor + 2 H2O. Removal of H(2)O(2), oxidation of toxic reductants, biosynthesis and degradation of lignin, suberization, auxin catabolism, response to environmental stresses such as wounding, pathogen attack and oxidative stress. These functions might be dependent on each isozyme/isoform in each plant tissue. This Arabidopsis thaliana (Mouse-ear cress) protein is Peroxidase 39 (PER39).